The chain runs to 415 residues: Lupus La protein homolog (415 aa).

In terms of domain architecture, HTH La-type RNA-binding spans N7–E99. Phosphoserine occurs at positions 92 and 94. An RRM domain is found at R111 to D187. An N6-acetyllysine modification is found at K116. T120 carries the post-translational modification Phosphothreonine. N6-acetyllysine occurs at positions 128 and 327. One can recognise a xRRM domain in the interval E226–H343. The segment at E323–K415 is disordered. The span at W328–G341 shows a compositional bias: basic residues. An N6-acetyllysine modification is found at K356. T377 carries the phosphothreonine modification. Basic and acidic residues predominate over residues T377 to K415.

In terms of assembly, interacts with DDX15. May interact with RUFY1. In terms of processing, phosphorylated.

The protein localises to the nucleus. Binds to the 3' poly(U) terminus of nascent RNA polymerase III transcripts, protecting them from exonuclease digestion and facilitating their folding and maturation. The polypeptide is Lupus La protein homolog (Ssb) (Rattus norvegicus (Rat)).